Consider the following 418-residue polypeptide: Light-independent protochlorophyllide reductase subunit N (418 aa).

The [4Fe-4S] cluster site is built by Cys-17, Cys-42, and Cys-103.

The protein belongs to the BchN/ChlN family. Protochlorophyllide reductase is composed of three subunits; ChlL, ChlN and ChlB. Forms a heterotetramer of two ChlB and two ChlN subunits. It depends on [4Fe-4S] cluster as a cofactor.

It catalyses the reaction chlorophyllide a + oxidized 2[4Fe-4S]-[ferredoxin] + 2 ADP + 2 phosphate = protochlorophyllide a + reduced 2[4Fe-4S]-[ferredoxin] + 2 ATP + 2 H2O. It participates in porphyrin-containing compound metabolism; chlorophyll biosynthesis (light-independent). Functionally, component of the dark-operative protochlorophyllide reductase (DPOR) that uses Mg-ATP and reduced ferredoxin to reduce ring D of protochlorophyllide (Pchlide) to form chlorophyllide a (Chlide). This reaction is light-independent. The NB-protein (ChlN-ChlB) is the catalytic component of the complex. The protein is Light-independent protochlorophyllide reductase subunit N of Prochlorococcus marinus (strain NATL2A).